The sequence spans 59 residues: Large ribosomal subunit protein uL30 (59 aa).

It belongs to the universal ribosomal protein uL30 family. In terms of assembly, part of the 50S ribosomal subunit.

The chain is Large ribosomal subunit protein uL30 from Alkaliphilus oremlandii (strain OhILAs) (Clostridium oremlandii (strain OhILAs)).